The following is a 427-amino-acid chain: MALNTPQITPTKKITVRAIGEELPRGDYQRCPQCDMLFSLPEINSHQSAYCPRCQAKIRDGRDWSLTRLAAMAFTMLLLMPFAWGEPLLHIWLLGIRIDANVMQGIWQMTKQGDAITGSMVFFCVIGAPLILVTSIAYLWFGNRLGMNLRPVLLMLERLKEWVMLDIYLVGIGVASIKVQDYAHIQAGVGLFSFVALVILTTVTLSHLNVEELWERFYPQRPATRRDEKLRVCLGCHFTGYPDQRGRCPRCHIPLRLRRRHSLQKCWAALLASIVLLLPANLLPISIIYLNGGRQEDTILSGIMSLASSNIAVAGIVFIASILVPFTKVIVMFTLLLSIHFKCQQGLRTRILLLRMVTWIGRWSMLDLFVISLTMSLINRDQILAFTMGPAAFYFGAAVILTILAVEWLDSRLLWDAHESGNARFDD.

The Cytoplasmic segment spans residues 1 to 75; it reads MALNTPQITP…LTRLAAMAFT (75 aa). Residues 76–96 form a helical membrane-spanning segment; sequence MLLLMPFAWGEPLLHIWLLGI. The Periplasmic segment spans residues 97–120; it reads RIDANVMQGIWQMTKQGDAITGSM. A helical membrane pass occupies residues 121–141; it reads VFFCVIGAPLILVTSIAYLWF. Residues 142–269 lie on the Cytoplasmic side of the membrane; the sequence is GNRLGMNLRP…RHSLQKCWAA (128 aa). A helical membrane pass occupies residues 270 to 290; it reads LLASIVLLLPANLLPISIIYL. The Periplasmic segment spans residues 291–310; that stretch reads NGGRQEDTILSGIMSLASSN. A helical transmembrane segment spans residues 311 to 331; it reads IAVAGIVFIASILVPFTKVIV. At 332–350 the chain is on the cytoplasmic side; it reads MFTLLLSIHFKCQQGLRTR. Residues 351–371 form a helical membrane-spanning segment; it reads ILLLRMVTWIGRWSMLDLFVI. The Periplasmic portion of the chain corresponds to 372 to 382; sequence SLTMSLINRDQ. Residues 383–403 traverse the membrane as a helical segment; it reads ILAFTMGPAAFYFGAAVILTI. Topologically, residues 404 to 427 are cytoplasmic; sequence LAVEWLDSRLLWDAHESGNARFDD.

The protein belongs to the PqiA family. As to quaternary structure, may interact with LetB in the inner membrane.

It localises to the cell inner membrane. In terms of biological role, could be part, together with LetB, of a system that transports lipids between the inner membrane and the outer membrane. Contributes to membrane integrity. This is Lipophilic envelope-spanning tunnel protein A from Escherichia coli (strain K12).